Reading from the N-terminus, the 108-residue chain is Flagellar hook-basal body complex protein FliE (108 aa).

The protein belongs to the FliE family.

It is found in the bacterial flagellum basal body. The chain is Flagellar hook-basal body complex protein FliE from Pseudomonas fluorescens (strain ATCC BAA-477 / NRRL B-23932 / Pf-5).